The chain runs to 186 residues: MILLLTGMPGSGKGVVAREFEKRGIPVVSMGDAIREEAEKRGIPKTPEGLKEVSLKVREELGPGAVAILTVPKVRKLLELNPVVVVEGVRSPYEVEEFRKEFKNEEIKVVAIHSSPKSRFQRLLKRQRSDDPKTWEEFVERDRKELNFGIGEVIALADYIIVNECGFDQLKANIEKLISMIFDGKI.

7-14 contributes to the ATP binding site; the sequence is GMPGSGKG.

The protein belongs to the UPF0200 family.

The sequence is that of UPF0200 protein PF1294 from Pyrococcus furiosus (strain ATCC 43587 / DSM 3638 / JCM 8422 / Vc1).